A 167-amino-acid chain; its full sequence is MAHTLQTVVLLLGTSILHPILADVNVMKDVTLGFGQALEKCREESQLTEEKMEEFFHFWSEDFKFEHRELGCAILCMSRHFNLLTDSSRMHHENTDKFIKSFPNNEVLSKHMVNLIHSCEQQHDADLDHCWRILRVAECFKRSCQEAGVAPSMELLMAEFIMESEIN.

Residues 1–22 (MAHTLQTVVLLLGTSILHPILA) form the signal peptide. 3 cysteine pairs are disulfide-bonded: cysteine 41–cysteine 76, cysteine 72–cysteine 130, and cysteine 119–cysteine 139.

This sequence belongs to the PBP/GOBP family. In terms of tissue distribution, antenna.

Present in the aqueous fluid surrounding olfactory sensory dendrites and are thought to aid in the capture and transport of hydrophobic odorants into and through this fluid. This Antheraea pernyi (Chinese oak silk moth) protein is General odorant-binding protein 1.